The following is a 291-amino-acid chain: Lectin (291 aa).

The signal sequence occupies residues 1 to 28 (MGISKKSQLVPLLAFITMFLMVVSRVSS). Position 118 (Asp118) interacts with Ca(2+). Arg138 provides a ligand contact to a carbohydrate. A propeptide spans 147–162 (NIIKNSTNLDFNAAYN) (removed in mature form). Mn(2+)-binding residues include Glu170 and Asp172. Ca(2+)-binding residues include Asp172, Tyr174, Asn176, and Asp181. A carbohydrate is bound at residue Tyr174. Asp181 and His186 together coordinate Mn(2+). Position 208 (Lys208) interacts with Ca(2+). Ser228 contacts a carbohydrate. A propeptide spans 281-291 (QLQDLRIASVV) (removed in mature form).

It belongs to the leguminous lectin family. The mature chain consists of residues 163-280 followed by residues 29-147. Concanavalin A-like lectins of the Diocleinae subtribe undergo proteolytic processing referred to as circular permutation. The propeptide is split into an N-terminal and a C-terminal part, the gamma and beta chain, respectively. These are then religated in beta-gamma order to form the mature alpha chain. The beta and gamma chains can often be detected in cell extracts.

Its function is as follows. D-mannose-binding lectin that also binds alpha-methyl-D-mannoside with even higher affinity. Has hemagglutinating activity against rabbit erythrocytes. Shows toxicity against the brine shrimp A.nauplii. Induces reversible paw edema and hypernociceptivity in rats. The sequence is that of Lectin from Dioclea lasiophylla.